The chain runs to 463 residues: MKELTCFKAYDIRGQLGSELDNEIAYRIGRSYGQFLKSENDADKTVVVGGDVRLTSEALKQALANGLMDAGINVIDIGVTGTEEIYFATFYLGVDGGIEVTASHNPMDYNGMKLVREGSKPISGDTGLREIQALAEKNEFMDVEVKGNYKKVSLLPEYVDHLISYITPAKIKPMKLVINSGNGAAGHVIDELEKRFIELSIPLEIIKVHHEEDGNFPNGIPNPLLPECRADTANAVKEHKADMGIAFDGDFDRCFLFDENGDFIEGYYIVGLLAEAFLQKEQGAKIIHDPRLSWNTIDVVTKSGGVPVMSKTGHAFIKERMRKEDAIYGGEMSAHHYFRDFGYCDSGMIPWLLITELLSLAPDISLSKLISAKRFLFPCSGEINFKVKQAKLIMEQVYLHYYENSIHFSAIDGISLEFEGWRFNLRDSNTEPLLRLNVESKQNIALMNDKVEELTKLIKKLDI.

Serine 103 acts as the Phosphoserine intermediate in catalysis. 4 residues coordinate Mg(2+): serine 103, aspartate 248, aspartate 250, and aspartate 252.

Belongs to the phosphohexose mutase family. The cofactor is Mg(2+).

The protein resides in the cell membrane. It carries out the reaction alpha-D-mannose 1-phosphate = D-mannose 6-phosphate. It participates in nucleotide-sugar biosynthesis; GDP-alpha-D-mannose biosynthesis; alpha-D-mannose 1-phosphate from D-fructose 6-phosphate: step 2/2. It functions in the pathway bacterial outer membrane biogenesis; LPS O-antigen biosynthesis. Its function is as follows. Involved in GDP-mannose biosynthesis which serves as the activated sugar nucleotide precursor for mannose residues in cell surface polysaccharides. The chain is Phosphomannomutase (rfbB) from Vibrio cholerae serotype O1 (strain ATCC 39315 / El Tor Inaba N16961).